The sequence spans 436 residues: tRNA-2-methylthio-N(6)-dimethylallyladenosine synthase (436 aa).

In terms of domain architecture, MTTase N-terminal spans 5-121 (RKLFIKTYGC…LPDMLDRTEG (117 aa)). Cys14, Cys50, Cys84, Cys158, Cys162, and Cys165 together coordinate [4Fe-4S] cluster. The region spanning 144-374 (ATRGPAAFLT…TEQQRAAQMA (231 aa)) is the Radical SAM core domain. In terms of domain architecture, TRAM spans 373–435 (MAMVGREVGV…PNSLAGERLG (63 aa)).

Belongs to the methylthiotransferase family. MiaB subfamily. As to quaternary structure, monomer. [4Fe-4S] cluster is required as a cofactor.

It localises to the cytoplasm. The catalysed reaction is N(6)-dimethylallyladenosine(37) in tRNA + (sulfur carrier)-SH + AH2 + 2 S-adenosyl-L-methionine = 2-methylsulfanyl-N(6)-dimethylallyladenosine(37) in tRNA + (sulfur carrier)-H + 5'-deoxyadenosine + L-methionine + A + S-adenosyl-L-homocysteine + 2 H(+). Catalyzes the methylthiolation of N6-(dimethylallyl)adenosine (i(6)A), leading to the formation of 2-methylthio-N6-(dimethylallyl)adenosine (ms(2)i(6)A) at position 37 in tRNAs that read codons beginning with uridine. In Cereibacter sphaeroides (strain ATCC 17029 / ATH 2.4.9) (Rhodobacter sphaeroides), this protein is tRNA-2-methylthio-N(6)-dimethylallyladenosine synthase.